The sequence spans 66 residues: Venom peptide CtAPI (66 aa).

Intrachain disulfides connect Cys7–Cys44, Cys16–Cys40, Cys20–Cys33, Cys24–Cys64, and Cys46–Cys58. Positions 7–64 (CEKDEEFVNCAPRCPQNCRNIRSYQPCLVLTPVCAPGCVCRSGKVKNDRGDCVSITDC) constitute a TIL domain.

It belongs to the serine protease inhibitor-like (TIL domain-containing) family. Expressed by the venom gland.

Its subcellular location is the secreted. Its function is as follows. Serine protease inhibitor. The chain is Venom peptide CtAPI from Chaerilus tricostatus (Scorpion).